Here is a 512-residue protein sequence, read N- to C-terminus: RCC1 domain-containing protein DDB_G0279253 (512 aa).

RCC1 repeat units lie at residues 1–56, 58–134, 135–185, 197–248, 249–319, 321–384, 386–443, and 454–512; these read MKIY…MIID, GDLY…ACDN, NGNI…NNNN, SGGV…ALSS, ENDV…LLDI, FKNV…LLTN, DKLY…IQVY, and NNNI…FILP. A compositionally biased stretch (polar residues) spans 66–77; the sequence is NDSGQLGINSNE. Disordered stretches follow at residues 66-85 and 162-200; these read NDSG…QQQQ and STSN…SGGV. Positions 162–196 are enriched in low complexity; the sequence is STSNNKNNNNNNNNNNNNNNNNNNNNNNNNNNNNN.

This chain is RCC1 domain-containing protein DDB_G0279253, found in Dictyostelium discoideum (Social amoeba).